The sequence spans 180 residues: GTP cyclohydrolase 1 (180 aa).

3 residues coordinate Zn(2+): cysteine 71, histidine 74, and cysteine 142.

The protein belongs to the GTP cyclohydrolase I family. Homomer.

It catalyses the reaction GTP + H2O = 7,8-dihydroneopterin 3'-triphosphate + formate + H(+). The protein operates within cofactor biosynthesis; 7,8-dihydroneopterin triphosphate biosynthesis; 7,8-dihydroneopterin triphosphate from GTP: step 1/1. The chain is GTP cyclohydrolase 1 from Helicobacter pylori (strain G27).